Reading from the N-terminus, the 156-residue chain is Protein-export protein SecB (156 aa).

This sequence belongs to the SecB family. Homotetramer, a dimer of dimers. One homotetramer interacts with 1 SecA dimer.

The protein localises to the cytoplasm. Functionally, one of the proteins required for the normal export of preproteins out of the cell cytoplasm. It is a molecular chaperone that binds to a subset of precursor proteins, maintaining them in a translocation-competent state. It also specifically binds to its receptor SecA. The protein is Protein-export protein SecB of Aeromonas hydrophila subsp. hydrophila (strain ATCC 7966 / DSM 30187 / BCRC 13018 / CCUG 14551 / JCM 1027 / KCTC 2358 / NCIMB 9240 / NCTC 8049).